The primary structure comprises 151 residues: Centrin-A (151 aa).

EF-hand domains follow at residues 80–115 and 116–151; these read DVYA…LGEA and RSDS…KKIY. Ca(2+) is bound by residues Asp-93, Asp-95, Ser-97, Tyr-99, Asp-104, Asp-129, Asn-131, Asp-133, Lys-135, and Glu-140.

It belongs to the centrin family.

It is found in the cytoplasm. The protein localises to the cytoskeleton. Its subcellular location is the microtubule organizing center. It localises to the centrosome. The protein resides in the nucleus. Plays a fundamental role in microtubule-organizing center structure and function. The protein is Centrin-A (cenA) of Dictyostelium discoideum (Social amoeba).